The primary structure comprises 156 residues: Small ribosomal subunit protein uS7 (156 aa).

The protein belongs to the universal ribosomal protein uS7 family. As to quaternary structure, part of the 30S ribosomal subunit. Contacts proteins S9 and S11.

In terms of biological role, one of the primary rRNA binding proteins, it binds directly to 16S rRNA where it nucleates assembly of the head domain of the 30S subunit. Is located at the subunit interface close to the decoding center, probably blocks exit of the E-site tRNA. This Synechococcus sp. (strain JA-2-3B'a(2-13)) (Cyanobacteria bacterium Yellowstone B-Prime) protein is Small ribosomal subunit protein uS7.